The chain runs to 185 residues: ATP-dependent protease subunit HslV (185 aa).

Residue Thr12 is part of the active site. Residues Ser168, Cys171, and Thr174 each coordinate Na(+).

It belongs to the peptidase T1B family. HslV subfamily. As to quaternary structure, a double ring-shaped homohexamer of HslV is capped on each side by a ring-shaped HslU homohexamer. The assembly of the HslU/HslV complex is dependent on binding of ATP.

It is found in the cytoplasm. The enzyme catalyses ATP-dependent cleavage of peptide bonds with broad specificity.. Allosterically activated by HslU binding. Its function is as follows. Protease subunit of a proteasome-like degradation complex believed to be a general protein degrading machinery. The sequence is that of ATP-dependent protease subunit HslV from Jannaschia sp. (strain CCS1).